The chain runs to 463 residues: Endoglucanase (463 aa).

A signal peptide spans 1–27 (MVEKRKIFTVLCACGIGFTSYTSCISA). A propeptide spanning residues 28 to 55 (AAIDNDTLINNGHKINSSIITNSSQVSA) is cleaved from the precursor. E130 serves as the catalytic Proton donor. The active-site Nucleophile is the D191.

The protein belongs to the glycosyl hydrolase 8 (cellulase D) family. Post-translationally, the N- and the C-terminus may be subjected to proteolysis.

The catalysed reaction is Endohydrolysis of (1-&gt;4)-beta-D-glucosidic linkages in cellulose, lichenin and cereal beta-D-glucans.. The sequence is that of Endoglucanase from Bacillus sp. (strain KSM-330).